The chain runs to 235 residues: Chromosome partition protein MukE (235 aa).

A disordered region spans residues 204–235; the sequence is QQEPSQSSLLDGFDADDTGHHDSELTMQEGEV.

Belongs to the MukE family. Interacts, and probably forms a ternary complex, with MukF and MukB. The complex formation is stimulated by calcium or magnesium.

Its subcellular location is the cytoplasm. It is found in the nucleoid. In terms of biological role, involved in chromosome condensation, segregation and cell cycle progression. May participate in facilitating chromosome segregation by condensation DNA from both sides of a centrally located replisome during cell division. Probably acts via its interaction with MukB and MukF. In Photobacterium profundum (strain SS9), this protein is Chromosome partition protein MukE.